A 528-amino-acid chain; its full sequence is Peptide chain release factor 3 (528 aa).

The region spanning 10 to 278 (DRRRTFGIIS…AFVEQAPVPR (269 aa)) is the tr-type G domain. GTP is bound by residues 19 to 26 (SHPDAGKT), 87 to 91 (DTPGH), and 141 to 144 (NKLD).

It belongs to the TRAFAC class translation factor GTPase superfamily. Classic translation factor GTPase family. PrfC subfamily.

The protein localises to the cytoplasm. Increases the formation of ribosomal termination complexes and stimulates activities of RF-1 and RF-2. It binds guanine nucleotides and has strong preference for UGA stop codons. It may interact directly with the ribosome. The stimulation of RF-1 and RF-2 is significantly reduced by GTP and GDP, but not by GMP. This is Peptide chain release factor 3 from Syntrophotalea carbinolica (strain DSM 2380 / NBRC 103641 / GraBd1) (Pelobacter carbinolicus).